The sequence spans 395 residues: MAKKYQDLASGIAMGAVFMYLLRRLYESLRVKSSADSLEEDIVNGVEGLIGNTKMVRIKSLSQATGCDILAKAEFLNPGNSPKDRVALQMIRTAEENGDLVPYQSNAVYEGTAGSTGISIAMLCCSLGYDSRIYMPSDQSKEKSDILELLGAHVQRVTPAPIVDPNHFVNTARRNAANHTVDESIPGKGYFANQFENPANWQAHFNSTGPEIWRQCAGKLDAFIAGSGTGGTIAGISRYLKSKDPSITVCLADPPGSGLYHKVLHGVMFDLAEREGTRRRHQVDTIVEGVGINRMTRNFSIAEPLIDMAYRVTDEQAVAMSRYLVTHDGLFVGSSSAVNCVAAVRLAKKLGPGHRIVTLLCDPGSRHFSKLYNEEFLRKKNIVPQVPSSLDFVEA.

The chain crosses the membrane as a helical span at residues 6–22; sequence QDLASGIAMGAVFMYLL. Residue K83 is modified to N6-(pyridoxal phosphate)lysine. Pyridoxal 5'-phosphate contacts are provided by residues 228–232 and S335; that span reads GTGGT.

This sequence belongs to the cysteine synthase/cystathionine beta-synthase family. Requires pyridoxal 5'-phosphate as cofactor.

It localises to the mitochondrion. Its subcellular location is the mitochondrion outer membrane. It carries out the reaction O-acetyl-L-serine + hydrogen sulfide = L-cysteine + acetate. Putative cysteine synthase that catalyzes the conversion of O-acetyl-L-serine (OAS) into cysteine, the last step in the cysteine biosynthesis pathway. However, in contrast to cysteine synthase cys11, this CS-like protein seems not to function in cysteine biosynthesis, at least under normal growth conditions, although the transcript is produced. This is Cysteine synthase 2 (cys12) from Schizosaccharomyces pombe (strain 972 / ATCC 24843) (Fission yeast).